The chain runs to 403 residues: Putative queuine tRNA-ribosyltransferase (403 aa).

D91 serves as the catalytic Proton acceptor. Substrate contacts are provided by residues D91–F95, D177, Q218, and G245. Residues G275–D281 form an RNA binding region. The active-site Nucleophile is the D294. The RNA binding; important for wobble base 34 recognition stretch occupies residues A299–R303. 4 residues coordinate Zn(2+): C341, C343, C346, and H372.

Belongs to the queuine tRNA-ribosyltransferase family. Homodimer. Within each dimer, one monomer is responsible for RNA recognition and catalysis, while the other monomer binds to the replacement base PreQ1. Zn(2+) serves as cofactor.

The catalysed reaction is 7-aminomethyl-7-carbaguanine + guanosine(34) in tRNA = 7-aminomethyl-7-carbaguanosine(34) in tRNA + guanine. Functionally, catalyzes the base-exchange of a guanine (G) residue with the queuine precursor 7-aminomethyl-7-deazaguanine (PreQ1) at position 34 (anticodon wobble position) in tRNAs with GU(N) anticodons (tRNA-Asp, -Asn, -His and -Tyr). Catalysis occurs through a double-displacement mechanism. The nucleophile active site attacks the C1' of nucleotide 34 to detach the guanine base from the RNA, forming a covalent enzyme-RNA intermediate. The proton acceptor active site deprotonates the incoming PreQ1, allowing a nucleophilic attack on the C1' of the ribose to form the product. After dissociation, two additional enzymatic reactions on the tRNA convert PreQ1 to queuine (Q), resulting in the hypermodified nucleoside queuosine (7-(((4,5-cis-dihydroxy-2-cyclopenten-1-yl)amino)methyl)-7-deazaguanosine). This Archaeoglobus fulgidus (strain ATCC 49558 / DSM 4304 / JCM 9628 / NBRC 100126 / VC-16) protein is Putative queuine tRNA-ribosyltransferase.